We begin with the raw amino-acid sequence, 322 residues long: Protein lin-56 (322 aa).

The disordered stretch occupies residues 264 to 322; that stretch reads SSQKLQQNGFPEKVEQMDKYSNKLKDEASDKKYEKPGKKDYVEEEGYWAPITDSEDDEA. Basic and acidic residues predominate over residues 275-304; it reads EKVEQMDKYSNKLKDEASDKKYEKPGKKDY.

In terms of tissue distribution, widely expressed throughout embryonic development. Expressed in the six multipotent ventral ectodermal blast cells, P3.p-P8.p, which generate the vulva and in their descendants throughout vulval development.

It localises to the nucleus. Functionally, required for translation, stability and/or localization of lin-15a. In Caenorhabditis elegans, this protein is Protein lin-56 (lin-56).